Reading from the N-terminus, the 218-residue chain is Adenylate kinase (218 aa).

Residue 10–15 (GAGKGT) participates in ATP binding. An NMP region spans residues 30 to 59 (STGDMLRAAVKAGTPLGIEAKKVMDSGGLV). AMP contacts are provided by residues T31, R36, 57 to 59 (GLV), 85 to 88 (GFPR), and Q92. Residues 122-159 (GRRSHSASGRTYHVKYNPPKVEGLDDVTGEPLIQREDD) form an LID region. Residues R123 and 132 to 133 (TY) each bind ATP. AMP-binding residues include R156 and R167. Residue G203 participates in ATP binding.

Belongs to the adenylate kinase family. Monomer.

The protein localises to the cytoplasm. It carries out the reaction AMP + ATP = 2 ADP. It participates in purine metabolism; AMP biosynthesis via salvage pathway; AMP from ADP: step 1/1. Functionally, catalyzes the reversible transfer of the terminal phosphate group between ATP and AMP. Plays an important role in cellular energy homeostasis and in adenine nucleotide metabolism. This Polaromonas naphthalenivorans (strain CJ2) protein is Adenylate kinase.